The sequence spans 469 residues: ATP sulfurylase 4, chloroplastic (469 aa).

A chloroplast-targeting transit peptide spans 1–51 (MASSAAAIVSGSPFRSSPLIHNHHASRYAPGSISVVSLPRQVSRRGLSVKS).

This sequence belongs to the sulfate adenylyltransferase family. As to quaternary structure, homotetramer. As to expression, expressed in roots and leaves.

It localises to the plastid. Its subcellular location is the chloroplast stroma. The enzyme catalyses sulfate + ATP + H(+) = adenosine 5'-phosphosulfate + diphosphate. The protein operates within sulfur metabolism; hydrogen sulfide biosynthesis; sulfite from sulfate: step 1/3. Functionally, sulfate adenylyltransferase. Catalyzes the first step of the sulfate assimilation pathway. The chain is ATP sulfurylase 4, chloroplastic (APS4) from Arabidopsis thaliana (Mouse-ear cress).